The sequence spans 438 residues: Adenylyltransferase and sulfurtransferase MOCS3 (438 aa).

ATP-binding positions include Gly-80, Asp-101, 108-112 (TNLHR), Lys-125, and 169-170 (DN). Zn(2+) contacts are provided by Cys-210 and Cys-213. The active-site Glycyl thioester intermediate; for adenylyltransferase activity is the Cys-227. Positions 285 and 288 each coordinate Zn(2+). Positions 335–436 (SKQRHVLVDV…WTRNVDKEFP (102 aa)) constitute a Rhodanese domain. The Cysteine persulfide intermediate; for sulfurtransferase activity role is filled by Cys-392.

In the N-terminal section; belongs to the HesA/MoeB/ThiF family. UBA4 subfamily. Zn(2+) serves as cofactor.

The protein localises to the cytoplasm. The protein resides in the cytosol. The catalysed reaction is [molybdopterin-synthase sulfur-carrier protein]-C-terminal Gly-Gly + ATP + H(+) = [molybdopterin-synthase sulfur-carrier protein]-C-terminal Gly-Gly-AMP + diphosphate. It catalyses the reaction [molybdopterin-synthase sulfur-carrier protein]-C-terminal Gly-Gly-AMP + S-sulfanyl-L-cysteinyl-[cysteine desulfurase] + AH2 = [molybdopterin-synthase sulfur-carrier protein]-C-terminal-Gly-aminoethanethioate + L-cysteinyl-[cysteine desulfurase] + A + AMP + 2 H(+). The protein operates within tRNA modification; 5-methoxycarbonylmethyl-2-thiouridine-tRNA biosynthesis. It participates in cofactor biosynthesis; molybdopterin biosynthesis. Plays a central role in 2-thiolation of mcm(5)S(2)U at tRNA wobble positions of cytosolic tRNA(Lys), tRNA(Glu) and tRNA(Gln). Also essential during biosynthesis of the molybdenum cofactor. Acts by mediating the C-terminal thiocarboxylation of sulfur carriers URM1 and MOCS2A. Its N-terminus first activates URM1 and MOCS2A as acyl-adenylates (-COAMP), then the persulfide sulfur on the catalytic cysteine is transferred to URM1 and MOCS2A to form thiocarboxylation (-COSH) of their C-terminus. The reaction probably involves hydrogen sulfide that is generated from the persulfide intermediate and that acts as a nucleophile towards URM1 and MOCS2A. Subsequently, a transient disulfide bond is formed. Does not use thiosulfate as sulfur donor; NFS1 probably acting as a sulfur donor for thiocarboxylation reactions. This Culex quinquefasciatus (Southern house mosquito) protein is Adenylyltransferase and sulfurtransferase MOCS3.